A 413-amino-acid chain; its full sequence is Eukaryotic initiation factor 4A-7 (413 aa).

Positions 40-68 (DSFDAMGLQENLLRGIYAYGFEKPSAIQQ) match the Q motif motif. In terms of domain architecture, Helicase ATP-binding spans 71-241 (IVPFCKGLDV…RKFMNKPVRI (171 aa)). An ATP-binding site is contributed by 84-91 (AQSGTGKT). The short motif at 189–192 (DEAD) is the DEAD box element. A Helicase C-terminal domain is found at 252 to 413 (GIKQFYVNVD…ELPANVADLL (162 aa)).

It belongs to the DEAD box helicase family. eIF4A subfamily. EIF4F is a multi-subunit complex, the composition of which varies with external and internal environmental conditions. It is composed of at least EIF4A, EIF4E and EIF4G.

The enzyme catalyses ATP + H2O = ADP + phosphate + H(+). Its function is as follows. ATP-dependent RNA helicase which is a subunit of the eIF4F complex involved in cap recognition and is required for mRNA binding to ribosome. In the current model of translation initiation, eIF4A unwinds RNA secondary structures in the 5'-UTR of mRNAs which is necessary to allow efficient binding of the small ribosomal subunit, and subsequent scanning for the initiator codon. The sequence is that of Eukaryotic initiation factor 4A-7 from Nicotiana tabacum (Common tobacco).